The sequence spans 161 residues: Cyclic pyranopterin monophosphate synthase (161 aa).

Substrate is bound by residues 75 to 77 (LCH) and 113 to 114 (ME). Residue aspartate 128 is part of the active site.

This sequence belongs to the MoaC family. Homohexamer; trimer of dimers.

The enzyme catalyses (8S)-3',8-cyclo-7,8-dihydroguanosine 5'-triphosphate = cyclic pyranopterin phosphate + diphosphate. Its pathway is cofactor biosynthesis; molybdopterin biosynthesis. In terms of biological role, catalyzes the conversion of (8S)-3',8-cyclo-7,8-dihydroguanosine 5'-triphosphate to cyclic pyranopterin monophosphate (cPMP). This chain is Cyclic pyranopterin monophosphate synthase, found in Shigella sonnei (strain Ss046).